Reading from the N-terminus, the 210-residue chain is Uracil phosphoribosyltransferase (210 aa).

5-phospho-alpha-D-ribose 1-diphosphate is bound by residues Arg-77, Arg-102, and 129–137 (DPMLATGAS). Uracil is bound by residues Ile-195 and 200 to 202 (GDA). Asp-201 provides a ligand contact to 5-phospho-alpha-D-ribose 1-diphosphate.

This sequence belongs to the UPRTase family. Mg(2+) is required as a cofactor.

The catalysed reaction is UMP + diphosphate = 5-phospho-alpha-D-ribose 1-diphosphate + uracil. Its pathway is pyrimidine metabolism; UMP biosynthesis via salvage pathway; UMP from uracil: step 1/1. With respect to regulation, allosterically activated by GTP. In terms of biological role, catalyzes the conversion of uracil and 5-phospho-alpha-D-ribose 1-diphosphate (PRPP) to UMP and diphosphate. The sequence is that of Uracil phosphoribosyltransferase from Mycoplasmoides gallisepticum (strain R(low / passage 15 / clone 2)) (Mycoplasma gallisepticum).